A 91-amino-acid polypeptide reads, in one-letter code: Small ribosomal subunit protein uS19 (91 aa).

Belongs to the universal ribosomal protein uS19 family.

Functionally, protein S19 forms a complex with S13 that binds strongly to the 16S ribosomal RNA. The sequence is that of Small ribosomal subunit protein uS19 from Bordetella petrii (strain ATCC BAA-461 / DSM 12804 / CCUG 43448).